Consider the following 61-residue polypeptide: Large ribosomal subunit protein bL32 (61 aa).

The protein belongs to the bacterial ribosomal protein bL32 family.

The protein is Large ribosomal subunit protein bL32 of Ehrlichia canis (strain Jake).